A 98-amino-acid polypeptide reads, in one-letter code: Large ribosomal subunit protein uL23 (98 aa).

The protein belongs to the universal ribosomal protein uL23 family. As to quaternary structure, part of the 50S ribosomal subunit. Contacts protein L29, and trigger factor when it is bound to the ribosome.

In terms of biological role, one of the early assembly proteins it binds 23S rRNA. One of the proteins that surrounds the polypeptide exit tunnel on the outside of the ribosome. Forms the main docking site for trigger factor binding to the ribosome. The sequence is that of Large ribosomal subunit protein uL23 from Gluconacetobacter diazotrophicus (strain ATCC 49037 / DSM 5601 / CCUG 37298 / CIP 103539 / LMG 7603 / PAl5).